The primary structure comprises 134 residues: Small ribosomal subunit protein uS9c (134 aa).

Belongs to the universal ribosomal protein uS9 family.

It localises to the plastid. The protein resides in the chloroplast. The protein is Small ribosomal subunit protein uS9c (rps9) of Euglena gracilis.